We begin with the raw amino-acid sequence, 308 residues long: Ribonuclease 3 (308 aa).

Positions 20-145 (YLRFYKMLGF…LVGAIYLDRG (126 aa)) constitute an RNase III domain. Mg(2+) is bound at residue Glu62. Asp66 is a catalytic residue. Positions 131 and 134 each coordinate Mg(2+). Glu134 is a catalytic residue. One can recognise a DRBM domain in the interval 173–242 (NFKSKLIEWS…ARVALGKIKN (70 aa)). The disordered stretch occupies residues 261–281 (QEEVTVSDSKPSDSGAVTPDL).

This sequence belongs to the ribonuclease III family. In terms of assembly, homodimer. The cofactor is Mg(2+).

The protein resides in the cytoplasm. It carries out the reaction Endonucleolytic cleavage to 5'-phosphomonoester.. Digests double-stranded RNA. Involved in the processing of primary rRNA transcript to yield the immediate precursors to the large and small rRNAs (23S and 16S). Processes some mRNAs, and tRNAs when they are encoded in the rRNA operon. Processes pre-crRNA and tracrRNA of type II CRISPR loci if present in the organism. This is Ribonuclease 3 from Phocaeicola vulgatus (strain ATCC 8482 / DSM 1447 / JCM 5826 / CCUG 4940 / NBRC 14291 / NCTC 11154) (Bacteroides vulgatus).